The chain runs to 344 residues: Dihydroorotase (344 aa).

2 residues coordinate Zn(2+): His13 and His15. Substrate-binding positions include 15–17 (HFR) and Asn41. Positions 98, 135, and 173 each coordinate Zn(2+). An N6-carboxylysine modification is found at Lys98. His135 serves as a coordination point for substrate. Leu218 serves as a coordination point for substrate. A Zn(2+)-binding site is contributed by Asp246. Residue Asp246 is part of the active site. Residues His250 and Ala262 each coordinate substrate.

It belongs to the metallo-dependent hydrolases superfamily. DHOase family. Class II DHOase subfamily. As to quaternary structure, homodimer. Zn(2+) is required as a cofactor.

It carries out the reaction (S)-dihydroorotate + H2O = N-carbamoyl-L-aspartate + H(+). Its pathway is pyrimidine metabolism; UMP biosynthesis via de novo pathway; (S)-dihydroorotate from bicarbonate: step 3/3. Functionally, catalyzes the reversible cyclization of carbamoyl aspartate to dihydroorotate. The polypeptide is Dihydroorotase (Shewanella woodyi (strain ATCC 51908 / MS32)).